The sequence spans 602 residues: Elongation factor 4 (602 aa).

Positions 7–189 (KYIRNFSIVA…AIVSKVPAPY (183 aa)) constitute a tr-type G domain. Residues 19–24 (DHGKST) and 136–139 (NKID) contribute to the GTP site.

This sequence belongs to the TRAFAC class translation factor GTPase superfamily. Classic translation factor GTPase family. LepA subfamily.

It is found in the cell membrane. It carries out the reaction GTP + H2O = GDP + phosphate + H(+). In terms of biological role, required for accurate and efficient protein synthesis under certain stress conditions. May act as a fidelity factor of the translation reaction, by catalyzing a one-codon backward translocation of tRNAs on improperly translocated ribosomes. Back-translocation proceeds from a post-translocation (POST) complex to a pre-translocation (PRE) complex, thus giving elongation factor G a second chance to translocate the tRNAs correctly. Binds to ribosomes in a GTP-dependent manner. This chain is Elongation factor 4, found in Clostridium botulinum (strain Loch Maree / Type A3).